A 417-amino-acid chain; its full sequence is Phosphoglycerate kinase 2 (417 aa).

Ser2 carries the post-translational modification N-acetylserine. A phosphoserine mark is found at Ser2 and Ser4. An N6-acetyllysine modification is found at Lys11. (2R)-3-phosphoglycerate is bound by residues Val23, Asp24, Phe25, Asn26, Gln38, Arg39, Ser62, His63, Gly65, and Arg66. Lys75, Lys86, and Lys97 each carry N6-acetyllysine. Positions 122 and 123 each coordinate (2R)-3-phosphoglycerate. 2 positions are modified to N6-acetyllysine: Lys131 and Lys146. (2R)-3-phosphoglycerate is bound by residues His170 and Arg171. A Phosphotyrosine modification is found at Tyr196. Lys199 bears the N6-acetyllysine mark. Gly214 is a binding site for ADP. Residue Gly214 participates in CDP binding. 2 residues coordinate AMP: Ala215 and Lys216. Ala215 lines the ATP pocket. Ala215 contributes to the Mg(2+) binding site. Mg(2+) is bound by residues Ala218 and Asp219. Residue Asp219 coordinates CDP. Residue Lys220 coordinates AMP. Lys220 contacts ATP. Residue Gly238 coordinates ADP. Gly238 serves as a coordination point for CDP. Gly239 lines the AMP pocket. Gly239 serves as a coordination point for ATP. N6-acetyllysine occurs at positions 267 and 291. AMP is bound at residue Ala313. ATP is bound at residue Ala313. CDP-binding residues include Gly338 and Phe343. Phe343 lines the ADP pocket. Glu344 lines the AMP pocket. Residues Glu344, Asp375, and Thr376 each contribute to the ATP site. Asp375 contributes to the Mg(2+) binding site.

It belongs to the phosphoglycerate kinase family. In terms of assembly, monomer. Mg(2+) is required as a cofactor. As to expression, testis specific.

It localises to the cytoplasm. The catalysed reaction is (2R)-3-phosphoglycerate + ATP = (2R)-3-phospho-glyceroyl phosphate + ADP. It functions in the pathway carbohydrate degradation; glycolysis; pyruvate from D-glyceraldehyde 3-phosphate: step 2/5. Its function is as follows. Essential for sperm motility and male fertility but is not required for the completion of spermatogenesis. The polypeptide is Phosphoglycerate kinase 2 (Sus scrofa (Pig)).